A 513-amino-acid polypeptide reads, in one-letter code: Glutamyl-tRNA(Gln) amidotransferase subunit B, mitochondrial (513 aa).

This sequence belongs to the GatB/GatE family. GatB subfamily. As to quaternary structure, subunit of the heterotrimeric GatFAB amidotransferase (AdT) complex, composed of A, B and F subunits.

The protein localises to the mitochondrion. The catalysed reaction is L-glutamyl-tRNA(Gln) + L-glutamine + ATP + H2O = L-glutaminyl-tRNA(Gln) + L-glutamate + ADP + phosphate + H(+). Allows the formation of correctly charged Gln-tRNA(Gln) through the transamidation of misacylated Glu-tRNA(Gln) in the mitochondria. The reaction takes place in the presence of glutamine and ATP through an activated gamma-phospho-Glu-tRNA(Gln). The chain is Glutamyl-tRNA(Gln) amidotransferase subunit B, mitochondrial from Debaryomyces hansenii (strain ATCC 36239 / CBS 767 / BCRC 21394 / JCM 1990 / NBRC 0083 / IGC 2968) (Yeast).